Reading from the N-terminus, the 128-residue chain is RxLR effector protein SFI2 (128 aa).

Residues 1-22 (MRSAFYIFLVVAVLARCSVVAA) form the signal peptide. The short motif at 52–71 (RLLRVAGREDDDATTDEEDR) is the RxLR-dEER element.

This sequence belongs to the RxLR effector family.

The protein localises to the secreted. The protein resides in the host nucleus. Its function is as follows. Effector that suppresses flg22-induced post-translational MAP kinase activation both tomato and Arabidopsis. The perception of highly conserved pathogen- or microbe-associated molecular patterns (PAMPs/MAMPs), such as flg22, triggers converging signaling pathways recruiting MAP kinase cascades and inducing transcriptional re-programming, yielding a generic antimicrobial response. The polypeptide is RxLR effector protein SFI2 (Phytophthora infestans (strain T30-4) (Potato late blight agent)).